Here is a 405-residue protein sequence, read N- to C-terminus: L-rhamnonate dehydratase (405 aa).

Substrate-binding residues include histidine 33 and arginine 59. Positions 226, 252, and 280 each coordinate Mg(2+). The active-site Proton acceptor is the histidine 329. Residue glutamate 349 coordinates substrate.

Belongs to the mandelate racemase/muconate lactonizing enzyme family. RhamD subfamily. As to quaternary structure, homooctamer; tetramer of dimers. The cofactor is Mg(2+).

It carries out the reaction L-rhamnonate = 2-dehydro-3-deoxy-L-rhamnonate + H2O. In terms of biological role, catalyzes the dehydration of L-rhamnonate to 2-keto-3-deoxy-L-rhamnonate (KDR). The chain is L-rhamnonate dehydratase from Escherichia coli O6:H1 (strain CFT073 / ATCC 700928 / UPEC).